The sequence spans 320 residues: Cytochrome c biogenesis protein CcsA (320 aa).

8 consecutive transmembrane segments (helical) span residues 9–29 (ILAHISFSLILVVTLIYWGTL), 36–56 (LSSSGGKGMIVTFLCTTGLLI), 70–90 (LYESFMFLSWSSSVFHILLEV), 97–117 (WLGAITAPSAMLTHGFATLGL), 143–163 (ILFSYATLLCGSLASIALLVI), 227–247 (AIGLGFSLSTIGTLSGAIWAN), 254–274 (WSWDPKETWALITWTIFAIYL), and 288–308 (AIVASLGFFIVWIRYLGVNLL).

The protein belongs to the CcmF/CycK/Ccl1/NrfE/CcsA family. As to quaternary structure, may interact with Ccs1.

The protein resides in the plastid. Its subcellular location is the chloroplast thylakoid membrane. In terms of biological role, required during biogenesis of c-type cytochromes (cytochrome c6 and cytochrome f) at the step of heme attachment. The protein is Cytochrome c biogenesis protein CcsA of Pinus thunbergii (Japanese black pine).